The following is a 350-amino-acid chain: 2,5-dihydroxypyridine 5,6-dioxygenase (350 aa).

Positions 265, 318, and 320 each coordinate Fe cation.

Requires Fe(2+) as cofactor.

It carries out the reaction 2,5-dihydroxypyridine + O2 = N-formylmaleamate + H(+). The protein operates within cofactor degradation; nicotinate degradation. Its function is as follows. Catalyzes the dioxygenolytic ring cleavage of 2,5-dihydroxypyridine between carbons 5 and 6 generating N-formylmaleamate in the aerobic nicotinate degradation pathway. The chain is 2,5-dihydroxypyridine 5,6-dioxygenase (nicX) from Pseudomonas putida (strain ATCC 47054 / DSM 6125 / CFBP 8728 / NCIMB 11950 / KT2440).